We begin with the raw amino-acid sequence, 1025 residues long: Synapsin (1025 aa).

Disordered stretches follow at residues 1-94 (MKRG…SRES), 439-784 (VCRP…NYGS), 872-910 (YDSN…KHSD), and 995-1025 (DFSD…LDLK). Residues 34 to 52 (TKPPVAGGPPNMPPPPAPG) show a composition bias toward pro residues. The span at 454–463 (SRSSVSSRAE) shows a compositional bias: low complexity. Residues 472-492 (PTPPLPAGPRPAPMGGPPPIP) are compositionally biased toward pro residues. Low complexity-rich tracts occupy residues 499–546 (VGSI…SSVS) and 594–626 (SETS…QFSF). The residue at position 539 (S539) is a Phosphoserine. Polar residues predominate over residues 651–673 (TTASSAVRPESSVSVSDSRNTDT). A compositionally biased stretch (basic and acidic residues) spans 690–702 (QQERVNPFDKEPS). A compositionally biased stretch (low complexity) spans 703–725 (KSGSAASIHTSSSSSISSSSISS). The segment covering 726-735 (RINRNGNAIQ) has biased composition (polar residues). Over residues 736–749 (SPPPPAGPPPPPPT) the composition is skewed to pro residues. Residues 750–759 (NVTAVGSNAN) are compositionally biased toward polar residues. The segment covering 760–772 (SSSGYRNSFSSSL) has biased composition (low complexity). Over residues 872–904 (YDSNSIASQGEGLNNPSDLPSYTRPSYSRSESN) the composition is skewed to polar residues. The span at 995–1007 (DFSDSGSMSSIGS) shows a compositional bias: low complexity.

The protein belongs to the synapsin family. As to quaternary structure, identified in a complex with Syt1 and nwk. In terms of tissue distribution, widely expressed in the embryonic and adult nervous system synaptic terminals.

It localises to the synapse. Functionally, plays a significant role in nervous system function, which is subtle at the cellular level but manifests itself in complex behavior. The sequence is that of Synapsin (Syn) from Drosophila melanogaster (Fruit fly).